We begin with the raw amino-acid sequence, 211 residues long: N-(5'-phosphoribosyl)anthranilate isomerase (211 aa).

Belongs to the TrpF family.

The enzyme catalyses N-(5-phospho-beta-D-ribosyl)anthranilate = 1-(2-carboxyphenylamino)-1-deoxy-D-ribulose 5-phosphate. Its pathway is amino-acid biosynthesis; L-tryptophan biosynthesis; L-tryptophan from chorismate: step 3/5. The chain is N-(5'-phosphoribosyl)anthranilate isomerase from Pseudomonas aeruginosa (strain LESB58).